The chain runs to 304 residues: Glutaminase (304 aa).

Substrate is bound by residues Ser63, Asn114, Glu158, Asn165, Tyr189, Tyr240, and Val258.

The protein belongs to the glutaminase family. As to quaternary structure, homotetramer.

It catalyses the reaction L-glutamine + H2O = L-glutamate + NH4(+). The sequence is that of Glutaminase from Shewanella amazonensis (strain ATCC BAA-1098 / SB2B).